Here is a 264-residue protein sequence, read N- to C-terminus: DNA-directed RNA polymerase subunit Rpo3 (264 aa).

Positions 203, 206, and 209 each coordinate [3Fe-4S] cluster.

It belongs to the archaeal Rpo3/eukaryotic RPB3 RNA polymerase subunit family. As to quaternary structure, part of the RNA polymerase complex. [3Fe-4S] cluster serves as cofactor.

It localises to the cytoplasm. The enzyme catalyses RNA(n) + a ribonucleoside 5'-triphosphate = RNA(n+1) + diphosphate. Functionally, DNA-dependent RNA polymerase (RNAP) catalyzes the transcription of DNA into RNA using the four ribonucleoside triphosphates as substrates. The sequence is that of DNA-directed RNA polymerase subunit Rpo3 from Methanothermobacter thermautotrophicus (strain ATCC 29096 / DSM 1053 / JCM 10044 / NBRC 100330 / Delta H) (Methanobacterium thermoautotrophicum).